A 341-amino-acid chain; its full sequence is ATP synthase subunit a 2 (341 aa).

Residues M1–S33 form the signal peptide. 6 helical membrane-spanning segments follow: residues V112 to A132, L173 to P193, G195 to I215, W242 to V262, I273 to A293, and I307 to L327.

Belongs to the ATPase A chain family. F-type ATPases have 2 components, CF(1) - the catalytic core - and CF(0) - the membrane proton channel. CF(1) has five subunits: alpha(3), beta(3), gamma(1), delta(1), epsilon(1). CF(0) has four main subunits: a, b, b' and c.

It localises to the cell inner membrane. In terms of biological role, key component of the proton channel; it plays a direct role in the translocation of protons across the membrane. This Chlorobium luteolum (strain DSM 273 / BCRC 81028 / 2530) (Pelodictyon luteolum) protein is ATP synthase subunit a 2.